Reading from the N-terminus, the 310-residue chain is MILTLTLNPSVDISYPLTALKLDDVNRVQEVSKTAGGKGLNVTRVLAQVGEPVLASGFIGGELGQFIAKKLDLAGIKHAFYNIKGETRNCIAILHEGQQTEILEQGPEIDNQEAAGFIKHFEQLLEKVEAVAISGSLPKGLNQDYYAQIIERCQNKGVPVILDCSGATLQTVLENPYKPTVIKPNISELYQLLNQPLDESLESLKQAVSQPLFEGVEWIIVSLGAQGAFAKHNHTFYRVNIPTISVLNPVGSGDSTVAGITSAILNHENDLDLLKKANTLGMLNAQEAQTGYVNLNNYDDLFNQIEVLEV.

It belongs to the carbohydrate kinase PfkB family. LacC subfamily.

The catalysed reaction is D-tagatofuranose 6-phosphate + ATP = D-tagatofuranose 1,6-bisphosphate + ADP + H(+). It participates in carbohydrate metabolism; D-tagatose 6-phosphate degradation; D-glyceraldehyde 3-phosphate and glycerone phosphate from D-tagatose 6-phosphate: step 1/2. The polypeptide is Tagatose-6-phosphate kinase (Staphylococcus aureus (strain bovine RF122 / ET3-1)).